The primary structure comprises 163 residues: NADH-quinone oxidoreductase subunit I (163 aa).

4Fe-4S ferredoxin-type domains follow at residues 53–83 (LRRYPNGEERCIACKLCEAICPAQAITIEAG) and 94–123 (VRYDIDMVKCIYCGFCQEACPVDAIVEGPN). 8 residues coordinate [4Fe-4S] cluster: cysteine 63, cysteine 66, cysteine 69, cysteine 73, cysteine 103, cysteine 106, cysteine 109, and cysteine 113.

Belongs to the complex I 23 kDa subunit family. As to quaternary structure, NDH-1 is composed of 14 different subunits. Subunits NuoA, H, J, K, L, M, N constitute the membrane sector of the complex. [4Fe-4S] cluster is required as a cofactor.

It is found in the cell inner membrane. The catalysed reaction is a quinone + NADH + 5 H(+)(in) = a quinol + NAD(+) + 4 H(+)(out). In terms of biological role, NDH-1 shuttles electrons from NADH, via FMN and iron-sulfur (Fe-S) centers, to quinones in the respiratory chain. The immediate electron acceptor for the enzyme in this species is believed to be ubiquinone. Couples the redox reaction to proton translocation (for every two electrons transferred, four hydrogen ions are translocated across the cytoplasmic membrane), and thus conserves the redox energy in a proton gradient. This is NADH-quinone oxidoreductase subunit I from Brucella canis (strain ATCC 23365 / NCTC 10854 / RM-666).